The chain runs to 156 residues: Probable succinate transporter subunit YjjB (156 aa).

The next 4 membrane-spanning stretches (helical) occupy residues 7–27 (WALLQDMVLAAIPALGFAMVF), 54–74 (FGMDIEPASLLASIMIGMIGI), 86–106 (VFTVAAVIPMFPGISAYTAMI), and 128–148 (FLKASFIVGSLSIGLSLPGLW).

Belongs to the ThrE exporter (TC 2.A.79) family. As to quaternary structure, the transporter is composed of YjjB and YjjP.

The protein localises to the cell inner membrane. In terms of biological role, involved in succinate export with YjjP. Both proteins are required for export. The chain is Probable succinate transporter subunit YjjB from Yersinia enterocolitica serotype O:8 / biotype 1B (strain NCTC 13174 / 8081).